Consider the following 166-residue polypeptide: 16S rRNA aminocarboxypropyltransferase (166 aa).

S-adenosyl-L-methionine contacts are provided by threonine 17, isoleucine 62, leucine 84, tyrosine 99, and serine 103.

The protein belongs to the TDD superfamily. TSR3 family.

It localises to the cytoplasm. It carries out the reaction an N(1)-methylpseudouridine in rRNA + S-adenosyl-L-methionine = N(1)-methyl-N(3)-[(3S)-3-amino-3-carboxypropyl]pseudouridine in rRNA + S-methyl-5'-thioadenosine + H(+). Functionally, aminocarboxypropyltransferase that catalyzes the aminocarboxypropyl transfer on pseudouridine corresponding to position 914 in M.jannaschii 16S rRNA. It constitutes the last step in biosynthesis of the hypermodified N1-methyl-N3-(3-amino-3-carboxypropyl) pseudouridine (m1acp3-Psi). In Saccharolobus islandicus (strain Y.N.15.51 / Yellowstone #2) (Sulfolobus islandicus), this protein is 16S rRNA aminocarboxypropyltransferase.